Here is a 405-residue protein sequence, read N- to C-terminus: MFDTEDVGVFLGLDVGKTAHHGHGLTPAGKKVLDKQLPNSEPRLRAVFDKLAAKFGTVLVIVDQPASIGALPLTVARDAGCKVAYLPGLAMRRIADLYPGEAKTDAKDAAVIADAARTMAHTLRSLELTDEITAELSVLVGFDQDLAAEATRTSNRIRGLLTQFHPSLERVLGPRLDHQAVTWLLERYGSPAALRKAGRRRLVELVRPKAPRMAQRLIDDIFDALDEQTVVVPGTGTLDIVVPSLASSLTAVHEQRRALEAQINALLEAHPLSPVLTSMPGVGVRTAAVLLVTVGDGTSFPTAAHLASYAGLAPTTKSSGTSIHGEHAPRGGNRQLKRAMFLSAFACMNADPASRTYYDRQRARGKTHTQALLRLARQRISVLFAMLRDGTFYESRMPAGVELAA.

The polypeptide is Insertion element IS110 uncharacterized 43.6 kDa protein (Streptomyces coelicolor (strain ATCC BAA-471 / A3(2) / M145)).